A 530-amino-acid polypeptide reads, in one-letter code: MSELFSRRLALLGEPANQSLLRHCLHGIERECLRVDAAGELARTPHPAALGSALTHPYITTDYSEALLEFITPAETDSAATLAALERVHRFACAKLDGEYLWSPSMPCPLPAEEDIPIARYGNSHIGRLKHVYRKGLALRYGKTMQCIAGIHYNFSLPEELWPLLQRAEGDVRGVRGVRDFQSERYIALIRNFRRYSWLLMYLFGASPALDKSFLRGRPHHLQELDAETLYLPWATSLRMSDLGYHNNAQADLTPCYNDLASYTDSLRRAVSTPYAPYAAIGTQRDGEWLQLNTNVLQIENEYYSTIRPKRVTASGERPIQALVARGVQYVEVRCLDIDPFLPLGIDLDEARFLDAFLLFCALEDSPCLAAGECASCTGNFLKVVKEGRRPGLHLQRHGQPMPLAAWAGELLERLQPLAALFDRAYGGDGYEKALHAQQAKVADPELTPSARLLATLRERGESFRAFALRQSLAHAESLRARPLGEEERQAFEAEARASLAEQAELERRDTGSFDDFVAAYQASIQGDGG.

The protein belongs to the glutamate--cysteine ligase type 1 family. Type 1 subfamily.

It catalyses the reaction L-cysteine + L-glutamate + ATP = gamma-L-glutamyl-L-cysteine + ADP + phosphate + H(+). It functions in the pathway sulfur metabolism; glutathione biosynthesis; glutathione from L-cysteine and L-glutamate: step 1/2. This is Glutamate--cysteine ligase from Azotobacter vinelandii (strain DJ / ATCC BAA-1303).